A 332-amino-acid chain; its full sequence is Glycerol-3-phosphate dehydrogenase [NAD(P)+] (332 aa).

NADPH is bound by residues serine 11, tryptophan 12, arginine 32, arginine 33, and lysine 106. Lysine 106 and glycine 136 together coordinate sn-glycerol 3-phosphate. NADPH is bound at residue alanine 140. Sn-glycerol 3-phosphate contacts are provided by lysine 191, aspartate 244, serine 254, arginine 255, and asparagine 256. Lysine 191 serves as the catalytic Proton acceptor. Residue arginine 255 coordinates NADPH. Residues valine 280 and glutamate 282 each contribute to the NADPH site.

Belongs to the NAD-dependent glycerol-3-phosphate dehydrogenase family.

The protein resides in the cytoplasm. It carries out the reaction sn-glycerol 3-phosphate + NAD(+) = dihydroxyacetone phosphate + NADH + H(+). The enzyme catalyses sn-glycerol 3-phosphate + NADP(+) = dihydroxyacetone phosphate + NADPH + H(+). Its pathway is membrane lipid metabolism; glycerophospholipid metabolism. Catalyzes the reduction of the glycolytic intermediate dihydroxyacetone phosphate (DHAP) to sn-glycerol 3-phosphate (G3P), the key precursor for phospholipid synthesis. This Corynebacterium urealyticum (strain ATCC 43042 / DSM 7109) protein is Glycerol-3-phosphate dehydrogenase [NAD(P)+].